Consider the following 264-residue polypeptide: [LysW]-aminoadipate/[LysW]-glutamate kinase (264 aa).

Residues 35–36, R62, and N167 contribute to the substrate site; that span reads GG.

The protein belongs to the acetylglutamate kinase family. LysZ subfamily.

The protein localises to the cytoplasm. It carries out the reaction [amino-group carrier protein]-C-terminal-N-(1,4-dicarboxybutan-1-yl)-L-glutamine + ATP = [amino-group carrier protein]-C-terminal-N-(1-carboxy-5-phosphooxy-5-oxopentan-1-yl)-L-glutamine + ADP. The catalysed reaction is [amino-group carrier protein]-C-terminal-gamma-(L-glutamyl)-L-glutamate + ATP = [amino-group carrier protein]-C-terminal-gamma-(5-phospho-L-glutamyl)-L-glutamate + ADP. It functions in the pathway amino-acid biosynthesis; L-lysine biosynthesis via AAA pathway; L-lysine from L-alpha-aminoadipate (Thermus route): step 2/5. Its pathway is amino-acid biosynthesis; L-arginine biosynthesis. In terms of biological role, involved in both the arginine and lysine biosynthetic pathways. Phosphorylates the LysW-bound precursors glutamate (for arginine biosynthesis), respectively alpha-aminoadipate (for lysine biosynthesis). The chain is [LysW]-aminoadipate/[LysW]-glutamate kinase from Saccharolobus islandicus (strain L.S.2.15 / Lassen #1) (Sulfolobus islandicus).